Consider the following 919-residue polypeptide: Isoleucine--tRNA ligase (919 aa).

A 'HIGH' region motif is present at residues 57-67 (PYANGHTHIGH). Residue E569 participates in L-isoleucyl-5'-AMP binding. The 'KMSKS' region signature appears at 610–614 (KMSKS). K613 is a binding site for ATP. Zn(2+)-binding residues include C895, C898, C910, and C913.

Belongs to the class-I aminoacyl-tRNA synthetase family. IleS type 1 subfamily. Monomer. Zn(2+) serves as cofactor.

The protein resides in the cytoplasm. It catalyses the reaction tRNA(Ile) + L-isoleucine + ATP = L-isoleucyl-tRNA(Ile) + AMP + diphosphate. In terms of biological role, catalyzes the attachment of isoleucine to tRNA(Ile). As IleRS can inadvertently accommodate and process structurally similar amino acids such as valine, to avoid such errors it has two additional distinct tRNA(Ile)-dependent editing activities. One activity is designated as 'pretransfer' editing and involves the hydrolysis of activated Val-AMP. The other activity is designated 'posttransfer' editing and involves deacylation of mischarged Val-tRNA(Ile). The protein is Isoleucine--tRNA ligase of Sulfurimonas denitrificans (strain ATCC 33889 / DSM 1251) (Thiomicrospira denitrificans (strain ATCC 33889 / DSM 1251)).